Reading from the N-terminus, the 468-residue chain is Ribulose bisphosphate carboxylase large chain (468 aa).

Lys-5 is subject to N6,N6,N6-trimethyllysine. The substrate site is built by Asn-114 and Thr-164. The active-site Proton acceptor is Lys-166. Lys-168 is a binding site for substrate. Residues Lys-192, Asp-194, and Glu-195 each contribute to the Mg(2+) site. Lys-192 carries the post-translational modification N6-carboxylysine. Residue His-285 is the Proton acceptor of the active site. Substrate is bound by residues Arg-286, His-318, and Ser-370.

This sequence belongs to the RuBisCO large chain family. Type I subfamily. As to quaternary structure, heterohexadecamer of 8 large chains and 8 small chains; disulfide-linked. The disulfide link is formed within the large subunit homodimers. It depends on Mg(2+) as a cofactor. In terms of processing, the disulfide bond which can form in the large chain dimeric partners within the hexadecamer appears to be associated with oxidative stress and protein turnover.

It is found in the plastid. It localises to the chloroplast. The catalysed reaction is 2 (2R)-3-phosphoglycerate + 2 H(+) = D-ribulose 1,5-bisphosphate + CO2 + H2O. It catalyses the reaction D-ribulose 1,5-bisphosphate + O2 = 2-phosphoglycolate + (2R)-3-phosphoglycerate + 2 H(+). RuBisCO catalyzes two reactions: the carboxylation of D-ribulose 1,5-bisphosphate, the primary event in carbon dioxide fixation, as well as the oxidative fragmentation of the pentose substrate in the photorespiration process. Both reactions occur simultaneously and in competition at the same active site. This chain is Ribulose bisphosphate carboxylase large chain, found in Salvia divinorum (Maria pastora).